The chain runs to 612 residues: Dihydroxy-acid dehydratase (612 aa).

Aspartate 81 is a binding site for Mg(2+). [2Fe-2S] cluster is bound at residue cysteine 122. The Mg(2+) site is built by aspartate 123 and lysine 124. At lysine 124 the chain carries N6-carboxylysine. A [2Fe-2S] cluster-binding site is contributed by cysteine 193. Glutamate 489 is a binding site for Mg(2+). Residue serine 515 is the Proton acceptor of the active site.

Belongs to the IlvD/Edd family. Homodimer. The cofactor is [2Fe-2S] cluster. Mg(2+) serves as cofactor.

It catalyses the reaction (2R)-2,3-dihydroxy-3-methylbutanoate = 3-methyl-2-oxobutanoate + H2O. The enzyme catalyses (2R,3R)-2,3-dihydroxy-3-methylpentanoate = (S)-3-methyl-2-oxopentanoate + H2O. The protein operates within amino-acid biosynthesis; L-isoleucine biosynthesis; L-isoleucine from 2-oxobutanoate: step 3/4. Its pathway is amino-acid biosynthesis; L-valine biosynthesis; L-valine from pyruvate: step 3/4. In terms of biological role, functions in the biosynthesis of branched-chain amino acids. Catalyzes the dehydration of (2R,3R)-2,3-dihydroxy-3-methylpentanoate (2,3-dihydroxy-3-methylvalerate) into 2-oxo-3-methylpentanoate (2-oxo-3-methylvalerate) and of (2R)-2,3-dihydroxy-3-methylbutanoate (2,3-dihydroxyisovalerate) into 2-oxo-3-methylbutanoate (2-oxoisovalerate), the penultimate precursor to L-isoleucine and L-valine, respectively. The protein is Dihydroxy-acid dehydratase of Pseudomonas aeruginosa (strain LESB58).